The primary structure comprises 207 residues: Holliday junction branch migration complex subunit RuvA (207 aa).

The domain I stretch occupies residues 1 to 63; sequence MISSLRGTVL…EDSLQLFGFS (63 aa). The tract at residues 64-142 is domain II; sequence GLEQLQVFEL…ACRRPSAPSA (79 aa). The interval 142–146 is flexible linker; sequence ARRPS. Residues 147–207 form a domain III region; the sequence is APSSVSDSVL…RLGPANQAAR (61 aa).

The protein belongs to the RuvA family. Homotetramer. Forms an RuvA(8)-RuvB(12)-Holliday junction (HJ) complex. HJ DNA is sandwiched between 2 RuvA tetramers; dsDNA enters through RuvA and exits via RuvB. An RuvB hexamer assembles on each DNA strand where it exits the tetramer. Each RuvB hexamer is contacted by two RuvA subunits (via domain III) on 2 adjacent RuvB subunits; this complex drives branch migration. In the full resolvosome a probable DNA-RuvA(4)-RuvB(12)-RuvC(2) complex forms which resolves the HJ.

It is found in the cytoplasm. Its function is as follows. The RuvA-RuvB-RuvC complex processes Holliday junction (HJ) DNA during genetic recombination and DNA repair, while the RuvA-RuvB complex plays an important role in the rescue of blocked DNA replication forks via replication fork reversal (RFR). RuvA specifically binds to HJ cruciform DNA, conferring on it an open structure. The RuvB hexamer acts as an ATP-dependent pump, pulling dsDNA into and through the RuvAB complex. HJ branch migration allows RuvC to scan DNA until it finds its consensus sequence, where it cleaves and resolves the cruciform DNA. The protein is Holliday junction branch migration complex subunit RuvA of Leifsonia xyli subsp. xyli (strain CTCB07).